A 411-amino-acid polypeptide reads, in one-letter code: 2,3-bisphosphoglycerate-independent phosphoglycerate mutase (411 aa).

Belongs to the BPG-independent phosphoglycerate mutase family. A-PGAM subfamily.

It catalyses the reaction (2R)-2-phosphoglycerate = (2R)-3-phosphoglycerate. It functions in the pathway carbohydrate degradation; glycolysis; pyruvate from D-glyceraldehyde 3-phosphate: step 3/5. Functionally, catalyzes the interconversion of 2-phosphoglycerate and 3-phosphoglycerate. This is 2,3-bisphosphoglycerate-independent phosphoglycerate mutase from Pyrobaculum arsenaticum (strain DSM 13514 / JCM 11321 / PZ6).